Reading from the N-terminus, the 656-residue chain is Fidgetin-like protein 1 (656 aa).

Residues 293 to 302 are compositionally biased toward polar residues; that stretch reads KYSNQPQRNP. A disordered region spans residues 293-354; that stretch reads KYSNQPQRNP…QGNSEMNAPS (62 aa). A compositionally biased stretch (basic and acidic residues) spans 331–340; that stretch reads RQEDVQDSNR. ATP contacts are provided by residues A386 and 426–431; that span reads GTGKTL.

It belongs to the AAA ATPase family. As to quaternary structure, hexamer. It depends on Mg(2+) as a cofactor.

The protein localises to the nucleus. Its subcellular location is the cytoplasm. It localises to the perinuclear region. It carries out the reaction ATP + H2O = ADP + phosphate + H(+). May be involved in DNA double-strand break (DBS) repair via homologous recombination (HR). May regulate osteoblast proliferation and differentiation. This is Fidgetin-like protein 1 (fignl1) from Xenopus tropicalis (Western clawed frog).